We begin with the raw amino-acid sequence, 62 residues long: Small ribosomal subunit protein uS14 (62 aa).

Residues C25, C28, C41, and C44 each contribute to the Zn(2+) site.

This sequence belongs to the universal ribosomal protein uS14 family. Zinc-binding uS14 subfamily. In terms of assembly, part of the 30S ribosomal subunit. Contacts proteins S3 and S10. The cofactor is Zn(2+).

Its function is as follows. Binds 16S rRNA, required for the assembly of 30S particles and may also be responsible for determining the conformation of the 16S rRNA at the A site. This Aquifex aeolicus (strain VF5) protein is Small ribosomal subunit protein uS14.